Reading from the N-terminus, the 318-residue chain is tRNA uridine(34) hydroxylase (318 aa).

The region spanning 123–217 is the Rhodanese domain; it reads EDDDTVIIDA…YGKDPETKGE (95 aa). Residue Cys-177 is the Cysteine persulfide intermediate of the active site.

The protein belongs to the TrhO family.

It carries out the reaction uridine(34) in tRNA + AH2 + O2 = 5-hydroxyuridine(34) in tRNA + A + H2O. Its function is as follows. Catalyzes oxygen-dependent 5-hydroxyuridine (ho5U) modification at position 34 in tRNAs. This chain is tRNA uridine(34) hydroxylase, found in Staphylococcus aureus (strain USA300).